A 193-amino-acid polypeptide reads, in one-letter code: Segregation and condensation protein B (193 aa).

It belongs to the ScpB family. As to quaternary structure, homodimer. Homodimerization may be required to stabilize the binding of ScpA to the Smc head domains. Component of a cohesin-like complex composed of ScpA, ScpB and the Smc homodimer, in which ScpA and ScpB bind to the head domain of Smc. The presence of the three proteins is required for the association of the complex with DNA.

It is found in the cytoplasm. Its function is as follows. Participates in chromosomal partition during cell division. May act via the formation of a condensin-like complex containing Smc and ScpA that pull DNA away from mid-cell into both cell halves. This is Segregation and condensation protein B from Clostridium botulinum (strain Kyoto / Type A2).